A 141-amino-acid chain; its full sequence is Large ribosomal subunit protein uL16 (141 aa).

Residues 1-23 form a disordered region; that stretch reads MLMPKRTKYRKQMKGRNRGKAHR.

It belongs to the universal ribosomal protein uL16 family. Part of the 50S ribosomal subunit.

Functionally, binds 23S rRNA and is also seen to make contacts with the A and possibly P site tRNAs. This chain is Large ribosomal subunit protein uL16, found in Helicobacter pylori (strain P12).